The chain runs to 186 residues: MSLVFDKWELDEVKVEDMGLAKYICLDSILVPHTMGRHVKRQFAKSKVSIVERLINKVMRTERNSGKKNKAYKIVQEAFEIINRRTKENPVQILVKAVENTSPREETTRIKYGGIGYQVAVDISPQRRVDLSLGFITRGAMQAAFKNKKSIEECLANEIMLAAEYDTRSFAIQKKEEKERIARSAH.

This sequence belongs to the universal ribosomal protein uS7 family. As to quaternary structure, part of the 30S ribosomal subunit.

Its function is as follows. One of the primary rRNA binding proteins, it binds directly to 16S rRNA where it nucleates assembly of the head domain of the 30S subunit. Is located at the subunit interface close to the decoding center. The polypeptide is Small ribosomal subunit protein uS7 (Methanothermobacter thermautotrophicus (strain ATCC 29096 / DSM 1053 / JCM 10044 / NBRC 100330 / Delta H) (Methanobacterium thermoautotrophicum)).